A 292-amino-acid chain; its full sequence is G1/S-specific cyclin-D3 (292 aa).

The Cyclin N-terminal domain maps to 27-152; it reads VLQSLLRLEE…LVLGKLKWDL (126 aa). The interval 256-292 is disordered; sequence REAAQTAPSPVPKAPRGSSSQGPSQTSTPTDVTAIHL. A phosphoserine mark is found at serine 264 and serine 279. Residues 272–285 show a composition bias toward low complexity; that stretch reads GSSSQGPSQTSTPT. Phosphothreonine is present on threonine 283.

The protein belongs to the cyclin family. Cyclin D subfamily. Interacts with the CDK4 and CDK6 protein kinases to form a serine/threonine kinase holoenzyme complex. The cyclin subunit imparts substrate specificity to the complex. Interacts with ATF5. Interacts with EIF3K. Component of the ternary complex cyclin D/CDK4/CDKN1B required for nuclear translocation and modulation of CDK4-mediated kinase activity. Can form similar complexes with either CDKN1A or CDKN2A. Phosphorylation at Thr-283 by MAP kinases is required for ubiquitination and degradation by the DCX(AMBRA1) complex. Post-translationally, ubiquitinated by the DCX(AMBRA1) complex during the transition from G1 to S cell phase, leading to its degradation: ubiquitination is dependent on Thr-283 phosphorylation. The DCX(AMBRA1) complex represents the major regulator of CCND3 stability during the G1/S transition. Polyubiquitinated by the SCF(FBXL2) complex, leading to proteasomal degradation.

It localises to the nucleus. It is found in the cytoplasm. In terms of biological role, regulatory component of the cyclin D3-CDK4 (DC) complex that phosphorylates and inhibits members of the retinoblastoma (RB) protein family including RB1 and regulates the cell-cycle during G(1)/S transition. Phosphorylation of RB1 allows dissociation of the transcription factor E2F from the RB/E2F complex and the subsequent transcription of E2F target genes which are responsible for the progression through the G(1) phase. Hypophosphorylates RB1 in early G(1) phase. Cyclin D-CDK4 complexes are major integrators of various mitogenenic and antimitogenic signals. Component of the ternary complex, cyclin D3/CDK4/CDKN1B, required for nuclear translocation and activity of the cyclin D-CDK4 complex. Shows transcriptional coactivator activity with ATF5 independently of CDK4. This is G1/S-specific cyclin-D3 from Mus musculus (Mouse).